The following is a 155-amino-acid chain: Small ribosomal subunit protein uS7cz/uS7cy (155 aa).

It belongs to the universal ribosomal protein uS7 family. As to quaternary structure, part of the 30S ribosomal subunit.

The protein resides in the plastid. The protein localises to the chloroplast. In terms of biological role, one of the primary rRNA binding proteins, it binds directly to 16S rRNA where it nucleates assembly of the head domain of the 30S subunit. The protein is Small ribosomal subunit protein uS7cz/uS7cy (rps7-A) of Nandina domestica (Heavenly bamboo).